The primary structure comprises 117 residues: DNA-directed RNA polymerase subunit omega (117 aa).

This sequence belongs to the RNA polymerase subunit omega family. As to quaternary structure, the RNAP catalytic core consists of 2 alpha, 1 beta, 1 beta' and 1 omega subunit. When a sigma factor is associated with the core the holoenzyme is formed, which can initiate transcription.

The enzyme catalyses RNA(n) + a ribonucleoside 5'-triphosphate = RNA(n+1) + diphosphate. Its function is as follows. Promotes RNA polymerase assembly. Latches the N- and C-terminal regions of the beta' subunit thereby facilitating its interaction with the beta and alpha subunits. This chain is DNA-directed RNA polymerase subunit omega, found in Ruegeria sp. (strain TM1040) (Silicibacter sp.).